The primary structure comprises 459 residues: Alcohol acyl transferase 1 allele GSa (459 aa).

Active-site proton acceptor residues include H164 and N385.

It belongs to the plant acyltransferase family. Highly expressed in the cortex and skin of ripe fruit.

The catalysed reaction is butan-1-ol + acetyl-CoA = butyl acetate + CoA. It carries out the reaction butan-1-ol + butanoyl-CoA = butyl butanoate + CoA. It catalyses the reaction butan-1-ol + hexanoyl-CoA = butyl hexanoate + CoA. The enzyme catalyses hexan-1-ol + butanoyl-CoA = hexyl butanoate + CoA. The catalysed reaction is hexan-1-ol + acetyl-CoA = hexyl acetate + CoA. It carries out the reaction 2-methylbutan-1-ol + butanoyl-CoA = 2-methylbutyl butanoate + CoA. It catalyses the reaction ethanol + butanoyl-CoA = ethyl butanoate + CoA. The enzyme catalyses hexanoyl-CoA + ethanol = ethyl hexanoate + CoA. Functionally, involved in the biosynthesis of volatile esters which confer ripe apple fruit flavor. Alcohol acyl transferase that can use a wide range of alcohols as substrate, including 2-methylbutanol, hexanol and ethanol, to produce esters such as butyl butanoate, butyl hexanoate, hexyl butanoate, ethyl butanoate and ethyl hexanoate and, to some extent, 2-methylbutyl acetate (2MBA), butyl acetate, hexyl acetate and 2-methylbutyl butanoate (2MBB). The sequence is that of Alcohol acyl transferase 1 allele GSa from Malus domestica (Apple).